We begin with the raw amino-acid sequence, 328 residues long: Phenylalanine--tRNA ligase alpha subunit (328 aa).

Glu253 contributes to the Mg(2+) binding site.

The protein belongs to the class-II aminoacyl-tRNA synthetase family. Phe-tRNA synthetase alpha subunit type 1 subfamily. Tetramer of two alpha and two beta subunits. It depends on Mg(2+) as a cofactor.

The protein resides in the cytoplasm. The enzyme catalyses tRNA(Phe) + L-phenylalanine + ATP = L-phenylalanyl-tRNA(Phe) + AMP + diphosphate + H(+). This is Phenylalanine--tRNA ligase alpha subunit from Coxiella burnetii (strain CbuG_Q212) (Coxiella burnetii (strain Q212)).